The chain runs to 205 residues: Guanylate kinase (205 aa).

In terms of domain architecture, Guanylate kinase-like spans 5–183 (GTLYTVSAPS…ALTEFRSIVV (179 aa)). An ATP-binding site is contributed by 12 to 19 (APSGAGKT).

The protein belongs to the guanylate kinase family.

The protein resides in the cytoplasm. It catalyses the reaction GMP + ATP = GDP + ADP. Essential for recycling GMP and indirectly, cGMP. The chain is Guanylate kinase from Saccharophagus degradans (strain 2-40 / ATCC 43961 / DSM 17024).